The primary structure comprises 307 residues: Ribosomal RNA small subunit methyltransferase H (307 aa).

Residues 33 to 35 (GGH), D52, L83, D97, and Q104 contribute to the S-adenosyl-L-methionine site.

Belongs to the methyltransferase superfamily. RsmH family.

It is found in the cytoplasm. It carries out the reaction cytidine(1402) in 16S rRNA + S-adenosyl-L-methionine = N(4)-methylcytidine(1402) in 16S rRNA + S-adenosyl-L-homocysteine + H(+). In terms of biological role, specifically methylates the N4 position of cytidine in position 1402 (C1402) of 16S rRNA. This Campylobacter fetus subsp. fetus (strain 82-40) protein is Ribosomal RNA small subunit methyltransferase H.